A 172-amino-acid chain; its full sequence is Acidic proline-rich protein PRP25 (172 aa).

Positions 1-16 (MLVVLFTAVLLTLSYA) are cleaved as a signal peptide. The interval 22-172 (ELQILDQTPN…QQGPPPPGGP (151 aa)) is disordered. The segment covering 32–44 (QKPPPPGFPPRPP) has biased composition (pro residues). Over residues 57–67 (GPQQSPLQPGK) the composition is skewed to low complexity. Composition is skewed to pro residues over residues 68–137 (PQDP…PQQK) and 145–172 (QGPPPPGGPQQKPPQPGNQQGPPPPGGP).

It localises to the secreted. This chain is Acidic proline-rich protein PRP25, found in Rattus norvegicus (Rat).